We begin with the raw amino-acid sequence, 184 residues long: Ras protein let-60 (184 aa).

Residue 10-17 coordinates GTP; that stretch reads GDGGVGKS. An Effector region motif is present at residues 32-40; it reads YDPTIEDSY. GTP contacts are provided by residues 57–61 and 116–119; these read DTAGQ and NKCD. Cysteine methyl ester is present on cysteine 181. A lipid anchor (S-farnesyl cysteine) is attached at cysteine 181. The propeptide at 182-184 is removed in mature form; it reads QIM.

It belongs to the small GTPase superfamily. Ras family. In terms of assembly, interacts with soc-2. Interacts (in GTP-bound form) with plc-1 (via Ras-associating domain 1). Expressed in body wall muscles and in the nervous system including ganglion, nerve ring dorsal and ventral nerve cords, motor neurons and sensory tail neurons.

It localises to the cell membrane. It carries out the reaction GTP + H2O = GDP + phosphate + H(+). Its function is as follows. GTP-binding protein with GTPase activity. The level of let-60 controls the switch between vulval and hypodermal cell fates during C.elegans vulval induction. May stimulate the guanine nucleotide exchange factor (GEF) activity of rap-1. May induce nuclear condensation. This is Ras protein let-60 from Caenorhabditis elegans.